Reading from the N-terminus, the 347-residue chain is Anthranilate phosphoribosyltransferase (347 aa).

Residues Gly88, 91–92 (GD), Thr96, 98–101 (NIST), 116–124 (KHGNRAASS), and Ser128 each bind 5-phospho-alpha-D-ribose 1-diphosphate. Anthranilate is bound at residue Gly88. Position 100 (Ser100) interacts with Mg(2+). Asn119 contributes to the anthranilate binding site. An anthranilate-binding site is contributed by Arg174. Residues Asp233 and Glu234 each coordinate Mg(2+).

The protein belongs to the anthranilate phosphoribosyltransferase family. Homodimer. Requires Mg(2+) as cofactor.

The enzyme catalyses N-(5-phospho-beta-D-ribosyl)anthranilate + diphosphate = 5-phospho-alpha-D-ribose 1-diphosphate + anthranilate. It functions in the pathway amino-acid biosynthesis; L-tryptophan biosynthesis; L-tryptophan from chorismate: step 2/5. In terms of biological role, catalyzes the transfer of the phosphoribosyl group of 5-phosphorylribose-1-pyrophosphate (PRPP) to anthranilate to yield N-(5'-phosphoribosyl)-anthranilate (PRA). The chain is Anthranilate phosphoribosyltransferase from Rhodospirillum rubrum (strain ATCC 11170 / ATH 1.1.1 / DSM 467 / LMG 4362 / NCIMB 8255 / S1).